Here is a 124-residue protein sequence, read N- to C-terminus: Small ribosomal subunit protein uS12c (124 aa).

Disordered stretches follow at residues 1–28 (MPTI…KSCP) and 104–124 (AAGV…KPKS). Composition is skewed to basic residues over residues 11-20 (ERRKINKKTK) and 109-124 (DRRK…KPKS).

This sequence belongs to the universal ribosomal protein uS12 family. Part of the 30S ribosomal subunit.

It localises to the plastid. It is found in the chloroplast. In terms of biological role, with S4 and S5 plays an important role in translational accuracy. Located at the interface of the 30S and 50S subunits. The protein is Small ribosomal subunit protein uS12c (rps12) of Porphyra purpurea (Red seaweed).